Here is a 355-residue protein sequence, read N- to C-terminus: D-alanine--D-alanine ligase (355 aa).

An ATP-grasp domain is found at 143–350 (KIIFSNLKIP…IEQLVAKLVD (208 aa)). 178 to 233 (LKKLNFPVFVKPSNSGSSLGISKVINKSEIIPALEKARGIDPSILIEEGLEVREIE) lines the ATP pocket. Positions 303, 317, and 319 each coordinate Mg(2+).

Belongs to the D-alanine--D-alanine ligase family. The cofactor is Mg(2+). Mn(2+) is required as a cofactor.

It localises to the cytoplasm. The enzyme catalyses 2 D-alanine + ATP = D-alanyl-D-alanine + ADP + phosphate + H(+). The protein operates within cell wall biogenesis; peptidoglycan biosynthesis. In terms of biological role, cell wall formation. This chain is D-alanine--D-alanine ligase, found in Prochlorococcus marinus (strain AS9601).